We begin with the raw amino-acid sequence, 383 residues long: Cathepsin D (383 aa).

The N-terminal stretch at methionine 1 to alanine 18 is a signal peptide. A propeptide spanning residues leucine 19 to asparagine 48 is cleaved from the precursor. A Peptidase A1 domain is found at tyrosine 63–alanine 378. Residue aspartate 81 is part of the active site. Residues cysteine 94 and cysteine 101 are joined by a disulfide bond. 2 N-linked (GlcNAc...) asparagine glycosylation sites follow: asparagine 118 and asparagine 238. The cysteines at positions 259 and 263 are disulfide-linked. Aspartate 268 is an active-site residue. A disulfide bond links cysteine 302 and cysteine 339. The N-linked (GlcNAc...) asparagine glycan is linked to asparagine 310.

It belongs to the peptidase A1 family. Monomer. N-glycosylated on 2 out of the 3 potential sites. Glycans contain sulfated Mannose.

It is found in the lysosome. The protein resides in the secreted. The catalysed reaction is Specificity similar to, but narrower than, that of pepsin A. Does not cleave the 4-Gln-|-His-5 bond in B chain of insulin.. In terms of biological role, protease that may act during cell growth and/or development. This is Cathepsin D (ctsD) from Dictyostelium discoideum (Social amoeba).